The following is a 310-amino-acid chain: Glutaminase (310 aa).

7 residues coordinate substrate: Ser66, Asn117, Glu161, Asn168, Tyr192, Tyr244, and Val262.

The protein belongs to the glutaminase family. As to quaternary structure, homotetramer.

It carries out the reaction L-glutamine + H2O = L-glutamate + NH4(+). The chain is Glutaminase from Shigella boydii serotype 4 (strain Sb227).